The sequence spans 436 residues: MSKPVIAIVGRPNVGKSTIFNRIAGERISIVEDTPGVTRDRIYTASEWLGHEFSLIDTGGIEISDAPFMEQIKQQAEIAIDEADVIIFLVSAREGVTDADERVAQILYRAEKPILLGVNKADNPEQRQDIFDFYSLGFGDPIPVSGAHGQGVGDLLDAAVAKFPTDLEEEDDDSIKFSLIGRPNVGKSSLVNAMLKEDRVIVSQIEGTTRDAIDTKFMAENNQEFTMIDTAGIRKRGKVYENTEKYAVMRALRAIDRSDVVLVVLNAEEGIREQDKKVAGYAHEAGRGIIIVVNKWDTLEKDNHTMKEFEDHIRNQFQYLDYAPIIFVSAKTGVRLQNLPAMIELVSENQNRRIQSALLNDVLMEATTVTPTPAINGKRLRIYYMTQVAVQPPTFVVFVNDINLLHFSYQRFLKNQLRKTFDFTGTPIHLIPRQRK.

EngA-type G domains lie at 4–167 (PVIA…PTDL) and 175–351 (IKFS…ENQN). GTP-binding positions include 10–17 (GRPNVGKS), 57–61 (DTGGI), 119–122 (NKAD), 181–188 (GRPNVGKS), 229–233 (DTAGI), and 294–297 (NKWD). Residues 352 to 436 (RRIQSALLND…PIHLIPRQRK (85 aa)) enclose the KH-like domain.

The protein belongs to the TRAFAC class TrmE-Era-EngA-EngB-Septin-like GTPase superfamily. EngA (Der) GTPase family. As to quaternary structure, associates with the 50S ribosomal subunit.

GTPase that plays an essential role in the late steps of ribosome biogenesis. The sequence is that of GTPase Der from Latilactobacillus sakei subsp. sakei (strain 23K) (Lactobacillus sakei subsp. sakei).